Consider the following 422-residue polypeptide: Serine hydroxymethyltransferase (422 aa).

(6S)-5,6,7,8-tetrahydrofolate is bound by residues Leu120 and 124–126 (GHL). Lys228 carries the N6-(pyridoxal phosphate)lysine modification.

This sequence belongs to the SHMT family. As to quaternary structure, homodimer. It depends on pyridoxal 5'-phosphate as a cofactor.

Its subcellular location is the cytoplasm. The enzyme catalyses (6R)-5,10-methylene-5,6,7,8-tetrahydrofolate + glycine + H2O = (6S)-5,6,7,8-tetrahydrofolate + L-serine. It functions in the pathway one-carbon metabolism; tetrahydrofolate interconversion. The protein operates within amino-acid biosynthesis; glycine biosynthesis; glycine from L-serine: step 1/1. Its function is as follows. Catalyzes the reversible interconversion of serine and glycine with tetrahydrofolate (THF) serving as the one-carbon carrier. This reaction serves as the major source of one-carbon groups required for the biosynthesis of purines, thymidylate, methionine, and other important biomolecules. Also exhibits THF-independent aldolase activity toward beta-hydroxyamino acids, producing glycine and aldehydes, via a retro-aldol mechanism. In Actinobacillus succinogenes (strain ATCC 55618 / DSM 22257 / CCUG 43843 / 130Z), this protein is Serine hydroxymethyltransferase.